The following is a 304-amino-acid chain: Light-independent protochlorophyllide reductase iron-sulfur ATP-binding protein (304 aa).

Residues 46–51 and Lys-75 contribute to the ATP site; that span reads GIGKST. Position 50 (Ser-50) interacts with Mg(2+). [4Fe-4S] cluster is bound by residues Cys-131 and Cys-165. ATP-binding positions include 216–217 and 240–242; these read NR and PDL.

The protein belongs to the NifH/BchL/ChlL family. Homodimer. Protochlorophyllide reductase is composed of three subunits; BchL, BchN and BchB. [4Fe-4S] cluster is required as a cofactor.

The enzyme catalyses chlorophyllide a + oxidized 2[4Fe-4S]-[ferredoxin] + 2 ADP + 2 phosphate = protochlorophyllide a + reduced 2[4Fe-4S]-[ferredoxin] + 2 ATP + 2 H2O. It participates in porphyrin-containing compound metabolism; bacteriochlorophyll biosynthesis (light-independent). Component of the dark-operative protochlorophyllide reductase (DPOR) that uses Mg-ATP and reduced ferredoxin to reduce ring D of protochlorophyllide (Pchlide) to form chlorophyllide a (Chlide). This reaction is light-independent. The L component serves as a unique electron donor to the NB-component of the complex, and binds Mg-ATP. The sequence is that of Light-independent protochlorophyllide reductase iron-sulfur ATP-binding protein from Rhodobacter capsulatus (strain ATCC BAA-309 / NBRC 16581 / SB1003).